A 562-amino-acid polypeptide reads, in one-letter code: Cytosolic Fe-S cluster assembly factor nar1 (562 aa).

Cys20 contacts [4Fe-4S] cluster. Residues 28-47 (PKNESSNSQNPYEVTTEDKV) form a disordered region. The segment covering 29–40 (KNESSNSQNPYE) has biased composition (polar residues). [4Fe-4S] cluster-binding residues include Cys62, Cys65, Cys68, Cys214, and Cys269. Positions 439-462 (ARVPAASAGGNRRQPISRNSASAG) are disordered. Polar residues predominate over residues 452 to 462 (QPISRNSASAG). [4Fe-4S] cluster contacts are provided by Cys475 and Cys479. 2 disordered regions span residues 492–513 (REAS…PTPH) and 541–562 (HSPS…IGLT). Residues 494–505 (ASTSTQSVTAVE) are compositionally biased toward polar residues.

It belongs to the NARF family.

In terms of biological role, component of the cytosolic Fe/S protein assembly machinery. Required for maturation of extramitochondrial Fe/S proteins. May play a role in the transfer of pre-assembled Fe/S clusters to target apoproteins. This is Cytosolic Fe-S cluster assembly factor nar1 (nar1) from Aspergillus flavus (strain ATCC 200026 / FGSC A1120 / IAM 13836 / NRRL 3357 / JCM 12722 / SRRC 167).